The primary structure comprises 378 residues: Apolipoprotein A-IV (378 aa).

Residues 1–20 (MFLKAVVLTLSLVAITGARA) form the signal peptide. 13 repeat units span residues 33 to 54 (DYFS…QSEL), 60 to 81 (SVTK…RNSW), 82 to 98 (EHSR…RQVG), 110 to 130 (PNCD…QAVG), 131 to 152 (PYAE…NQLT), 153 to 174 (SHAQ…SSLT), 175 to 196 (PFAD…GHLT), 197 to 218 (PYTD…RSLA), 219 to 240 (PYAQ…FQMK), 241 to 262 (KNAE…QRLA), 263 to 280 (PVAE…AGLH), 281 to 302 (KSLA…RNVG), and 303 to 324 (PYGE…QKLG). Residues 33 to 324 (DYFSQLSNNA…QVEELRQKLG (292 aa)) form a 13 X 22 AA approximate tandem repeats region. The segment at 354 to 378 (EKESQDTPVALPKQEQEQSAVPLES) is disordered.

This sequence belongs to the apolipoprotein A1/A4/E family. In terms of assembly, homodimer.

It localises to the secreted. Its function is as follows. May have a role in chylomicrons and VLDL secretion and catabolism. Required for efficient activation of lipoprotein lipase by ApoC-II; potent activator of LCAT. Apoa-IV is a major component of HDL and chylomicrons. In Canis lupus familiaris (Dog), this protein is Apolipoprotein A-IV.